The chain runs to 21 residues: Peptidyl-prolyl cis-trans isomerase (21 aa).

The interval 1 to 21 is disordered; that stretch reads ENFKIKHTEPGLLSMANAGKN.

It belongs to the cyclophilin-type PPIase family. PPIase A subfamily.

It carries out the reaction [protein]-peptidylproline (omega=180) = [protein]-peptidylproline (omega=0). Its function is as follows. PPIases accelerate the folding of proteins. It catalyzes the cis-trans isomerization of proline imidic peptide bonds in oligopeptides. This is Peptidyl-prolyl cis-trans isomerase from Naegleria fowleri (Brain eating amoeba).